A 443-amino-acid chain; its full sequence is Glutamyl-tRNA reductase (443 aa).

Residues 49-52, Ser109, 114-116, and Gln120 each bind substrate; these read TCNR and EPQ. Catalysis depends on Cys50, which acts as the Nucleophile. 189-194 contacts NADP(+); it reads GAGKMC. The tract at residues 421-443 is disordered; the sequence is PDSQQTGGDSVEKDADSKQDLTS. The segment covering 430-443 has biased composition (basic and acidic residues); sequence SVEKDADSKQDLTS.

It belongs to the glutamyl-tRNA reductase family. As to quaternary structure, homodimer.

It carries out the reaction (S)-4-amino-5-oxopentanoate + tRNA(Glu) + NADP(+) = L-glutamyl-tRNA(Glu) + NADPH + H(+). Its pathway is porphyrin-containing compound metabolism; protoporphyrin-IX biosynthesis; 5-aminolevulinate from L-glutamyl-tRNA(Glu): step 1/2. Functionally, catalyzes the NADPH-dependent reduction of glutamyl-tRNA(Glu) to glutamate 1-semialdehyde (GSA). This is Glutamyl-tRNA reductase from Syntrophotalea carbinolica (strain DSM 2380 / NBRC 103641 / GraBd1) (Pelobacter carbinolicus).